The primary structure comprises 477 residues: Glycogen synthase (477 aa).

Lys-15 is a binding site for ADP-alpha-D-glucose.

The protein belongs to the glycosyltransferase 1 family. Bacterial/plant glycogen synthase subfamily.

The catalysed reaction is [(1-&gt;4)-alpha-D-glucosyl](n) + ADP-alpha-D-glucose = [(1-&gt;4)-alpha-D-glucosyl](n+1) + ADP + H(+). The protein operates within glycan biosynthesis; glycogen biosynthesis. In terms of biological role, synthesizes alpha-1,4-glucan chains using ADP-glucose. This is Glycogen synthase from Shigella dysenteriae serotype 1 (strain Sd197).